The primary structure comprises 646 residues: UvrABC system protein C (646 aa).

The 80-residue stretch at 16 to 95 (VEPGVYRFRD…IKEFDPRFNV (80 aa)) folds into the GIY-YIG domain. The UVR domain occupies 208–243 (DRFARALEQQMNAAAEQLDFERAARLRDDLSALKRA).

It belongs to the UvrC family. Interacts with UvrB in an incision complex.

The protein resides in the cytoplasm. The UvrABC repair system catalyzes the recognition and processing of DNA lesions. UvrC both incises the 5' and 3' sides of the lesion. The N-terminal half is responsible for the 3' incision and the C-terminal half is responsible for the 5' incision. The polypeptide is UvrABC system protein C (Mycobacterium bovis (strain BCG / Pasteur 1173P2)).